Consider the following 172-residue polypeptide: Cell division protein SepF (172 aa).

Positions R18–L73 are disordered. Acidic residues predominate over residues E22 to Y40. Residues Q48–A59 show a composition bias toward basic and acidic residues. The segment covering R60–R70 has biased composition (basic residues).

The protein belongs to the SepF family. Homodimer. Interacts with FtsZ.

The protein resides in the cytoplasm. Cell division protein that is part of the divisome complex and is recruited early to the Z-ring. Probably stimulates Z-ring formation, perhaps through the cross-linking of FtsZ protofilaments. Its function overlaps with FtsA. The polypeptide is Cell division protein SepF (Cutibacterium acnes (strain DSM 16379 / KPA171202) (Propionibacterium acnes)).